A 469-amino-acid chain; its full sequence is MKRFPTIKIYDTLSGQVVDLVPVKEGEIKIYLCGPTVYNLLHIGNARPIIIFDAFRRFLEYIGYKVTLVQNFTDIDDKIIEQAKKENLPFEEVGKRYIIEYWRDMTALKARAFNFHPKTTNYVDEIISYIKELEEKGYAYKAENGDVYFEVEKFSRYGELSHRKVEDLKVGVRVEVSEYKKNPLDFALWKASKEGEPFWESPWGKGRPGWHIECSVMSSEILGDTFDIHAGGNDLIFPHHENERAQAIAKSGKDFAKYWMHNGMIRMAQDKMSKSLGNVWYLRDLLKKFDSDVLKIFILSKHYRIPIDVSEELLRNQEVSVNRVKESLNEAETFFNGKVPCPQKMNYFKEQEEYLISSLSNDFDTPSVVARIFELSRDLNKALNSRDEETIKNNYYIIRNIYGSVLGVFETNEQIQKNNVELNQLMEIILNVRSALREEKLYNLSDYIRDNLSKIGIEIKDTPEGTKWS.

Cysteine 33 contributes to the Zn(2+) binding site. Positions 35–45 match the 'HIGH' region motif; that stretch reads PTVYNLLHIGN. Zn(2+) is bound by residues cysteine 214, histidine 239, and glutamate 243. The 'KMSKS' region signature appears at 271–275; the sequence is KMSKS. Residue lysine 274 coordinates ATP.

The protein belongs to the class-I aminoacyl-tRNA synthetase family. Monomer. Zn(2+) is required as a cofactor.

The protein resides in the cytoplasm. The catalysed reaction is tRNA(Cys) + L-cysteine + ATP = L-cysteinyl-tRNA(Cys) + AMP + diphosphate. This is Cysteine--tRNA ligase from Petrotoga mobilis (strain DSM 10674 / SJ95).